The following is a 1242-amino-acid chain: ATP-dependent helicase/nuclease subunit A (1242 aa).

The 474-residue stretch at 13–486 folds into the UvrD-like helicase ATP-binding domain; the sequence is SQWTDDQWKA…IDLAKNFRSR (474 aa). An ATP-binding site is contributed by 34–41; sequence AAAGSGKT. Positions 506–806 constitute a UvrD-like helicase C-terminal domain; the sequence is GEIEYDADAE…RIMTIHKSKG (301 aa).

It belongs to the helicase family. AddA subfamily. In terms of assembly, heterodimer of AddA and AddB/RexB. Requires Mg(2+) as cofactor.

The enzyme catalyses Couples ATP hydrolysis with the unwinding of duplex DNA by translocating in the 3'-5' direction.. It catalyses the reaction ATP + H2O = ADP + phosphate + H(+). Functionally, the heterodimer acts as both an ATP-dependent DNA helicase and an ATP-dependent, dual-direction single-stranded exonuclease. Recognizes the chi site generating a DNA molecule suitable for the initiation of homologous recombination. The AddA nuclease domain is required for chi fragment generation; this subunit has the helicase and 3' -&gt; 5' nuclease activities. This is ATP-dependent helicase/nuclease subunit A from Bacillus cytotoxicus (strain DSM 22905 / CIP 110041 / 391-98 / NVH 391-98).